The sequence spans 146 residues: Hemoglobin subunit theta (146 aa).

The Globin domain occupies 2–146 (HFTAEEKSVI…VATALAHKYH (145 aa)). Heme b is bound by residues H63 and H92.

The protein belongs to the globin family.

This chain is Hemoglobin subunit theta, found in Sus scrofa (Pig).